The chain runs to 356 residues: MSIILSLETSCDESAAALVSNEKGKIDLLANEIASQIDEHANWGGVVPEIASRRHLENLPFLIEEVFAKSKLQIKDIDAVAATVTPGLAGSLLVGSITARTLANLHQIPFLGIHHLEGHLSSIYLSEKHPKPPFLVLLVSGGHTELIKVDVKHKYQRLGRSHDDAAGEAFDKVARLLGLSYPGGPAIQKIAKSGDPKKFLFPKGRVSKPEGGFYPYDFSFSGLKTAVFRQIEKIRSENKKLPIEDIAASFEYIVAEVLVERSFKCALDQGLNSLVLVGGVAANVRLREMMLAKASENSIDITLAPMEFCTDNAAMIGAAALLRLSSESFKSSMELGVSARWPLEKSDLLYDPIPPF.

Histidine 115 and histidine 119 together coordinate Fe cation. Residues 138-142 (LVSGG), aspartate 171, glycine 184, and asparagine 283 each bind substrate. Fe cation is bound at residue aspartate 311.

It belongs to the KAE1 / TsaD family. Fe(2+) is required as a cofactor.

It localises to the cytoplasm. The catalysed reaction is L-threonylcarbamoyladenylate + adenosine(37) in tRNA = N(6)-L-threonylcarbamoyladenosine(37) in tRNA + AMP + H(+). Its function is as follows. Required for the formation of a threonylcarbamoyl group on adenosine at position 37 (t(6)A37) in tRNAs that read codons beginning with adenine. Is involved in the transfer of the threonylcarbamoyl moiety of threonylcarbamoyl-AMP (TC-AMP) to the N6 group of A37, together with TsaE and TsaB. TsaD likely plays a direct catalytic role in this reaction. In Prochlorococcus marinus (strain NATL2A), this protein is tRNA N6-adenosine threonylcarbamoyltransferase.